Consider the following 210-residue polypeptide: Methylthioribulose-1-phosphate dehydratase (210 aa).

2 residues coordinate Zn(2+): histidine 94 and histidine 96.

This sequence belongs to the aldolase class II family. MtnB subfamily. Zn(2+) serves as cofactor.

It catalyses the reaction 5-(methylsulfanyl)-D-ribulose 1-phosphate = 5-methylsulfanyl-2,3-dioxopentyl phosphate + H2O. Its pathway is amino-acid biosynthesis; L-methionine biosynthesis via salvage pathway; L-methionine from S-methyl-5-thio-alpha-D-ribose 1-phosphate: step 2/6. Its function is as follows. Catalyzes the dehydration of methylthioribulose-1-phosphate (MTRu-1-P) into 2,3-diketo-5-methylthiopentyl-1-phosphate (DK-MTP-1-P). This is Methylthioribulose-1-phosphate dehydratase from Yersinia enterocolitica serotype O:8 / biotype 1B (strain NCTC 13174 / 8081).